Consider the following 450-residue polypeptide: MHAISSAAPAPSVRLPFYRQLYFQVVFAIIIGVLLGHFQPEYGAAMKPFGDAFIKLIKMIIAPVIFLTIVTGIASMSHLSAVGRVFGKAMAYFLTFSTLALVVGLVVANVMQPGTGMHINVAELDQTAVKGYVSKSHEMTLTGFALDIIPKTLISPFVGDNILQVLLVAVLFGVSLAMVGDAGKPILDFLDGLTKPVFKLVNIVMKAAPIGAFGAMAFTIGKFGLGSLVNLAELVLTFYITSAVFVLVVLGAVARACGFSVLKLIRYLKAELLLVLGTSSSESALPSLMEKMEKAGCAKSVVGLVVPTGYSFNLDGTNIYMTLAALFIAQATDTHLTLGHQIALLLVAMLSSKGAAGVTGAGFITLAATLAVVPEVPVAGMALILGVDRFMSECRSLTNFIGNAVATVVVSRWENALDADRLHRVLDGEAEFLPEPERAVEPVVLARHRA.

8 helical membrane-spanning segments follow: residues V25–A45, L56–M76, M90–V110, I162–A182, L200–I220, L234–A254, I319–G339, and A367–V387.

The protein belongs to the dicarboxylate/amino acid:cation symporter (DAACS) (TC 2.A.23) family.

Its subcellular location is the cell inner membrane. Functionally, responsible for the transport of dicarboxylates such as succinate, fumarate, and malate from the periplasm across the membrane. This Acidovorax sp. (strain JS42) protein is C4-dicarboxylate transport protein.